The chain runs to 59 residues: Potassium channel toxin alpha-KTx 1.2 (59 aa).

The signal sequence occupies residues 1 to 22 (MKILSVLLLALIICSIIDWSEG). Position 23 is a pyrrolidone carboxylic acid (Gln23). Disulfide bonds link Cys29-Cys50, Cys35-Cys55, and Cys39-Cys57. An interaction with Ca(2+)-activated K(+) channels region spans residues 48 to 55 (GKCMNKKC).

The protein belongs to the short scorpion toxin superfamily. Potassium channel inhibitor family. Alpha-KTx 01 subfamily. In terms of tissue distribution, expressed by the venom gland.

Its subcellular location is the secreted. Blocks calcium-activated potassium channels (Kd=43 nM on KCa1.1/KCNMA1). Has a potent presynaptic facilitatory action, with less effect on direct muscle stimulation. The chain is Potassium channel toxin alpha-KTx 1.2 from Leiurus hebraeus (Hebrew deathstalker scorpion).